The following is a 1171-amino-acid chain: MPANQRKQTSQSSYLQTPRNTATPSTQDAGKSVIAPKSSTSDSSETFLTMAQTTTKSNGQLPTPSANINGVPPTVNRKKQKRRAKQAARAAAEQAQGSQTNGGPSPGDVKKQMQELEARFRETGLDEQYDDDEQLDPAEDNAYYSDEEGDAYSGSYGHDGSSTNGYAMPTTNSSSKKQKKKKKSKSSQSDNSNYAHHGPNGSSHNHVSLPIPLQSPPNMQRGPGISKEKIWNTSSQEERERIKEFWLSLGEDERKSLVKVEKDAVLKKMKEQQKHSCSCTVCGRKRTAIEEELEVLYDAYYEELEQYANHQGGDGPPPMMPPPRRFGAMSGLQPPNRLPPVFTGQQPSRGRIVEQLGDDEDEEGDEEYSEDDADEDDYSDEEPEEIPRSHATDFFNFGNSLTVQGGILTVADDLLKNDGKKFIEMMEQLAERRMAREEDAKEQYANANYGHPPNGSMHPHSHGHLHNHPPPPEEDDYDDEEDDEDEYDSQEEDYDEEEMDSMTEEQRMEEGRRMFQIFAARMFEQRVLTAYKEKVAKERQQKLLEELEEESRADSLRKAKKAKDAQKKKEKLLEKKRALAEEKARKEAEKAAEEASLREIEEKKAEEQRLKREENRKKKEAQKKADEEERVRKEAEKQRRLQEQRERQAEQERKQREAKEREKKEKEELRRQALEAKEAKEKEAKERREKHEREKREKEAKVKADKEARELQKREEVAAQQAAVQAAQSAAQASRRPNQVPTPNLSHVLASPHISVAIPAVPKAPTPIKLRTNSQQENHSTIPRTPSGIPQSPFAGMQPMPGGLQPGMPMVPPGFGRPHHDPMFTHQQPIGNQFRPLPIPNGGMPQFQPGFNMHHMPQGRGFPMHGPPGFPQPSPNGMGSIGQLFGAPKEAPPSQAHSRNQSGSFDALSSTTQAQPIARPAPIGRPSSIVHGARHGDKSSNGEPDESSKHLGSSALLDDTDEPLKVGMGPRRSSAAPGNSSRQNFLPPPFGMDRSDPAGMMSSFGTWGAPPNPFGSSSLPGSNGFGGGWNTSLNMNNSFGMPPYFRPSQPRSVAVRLMICMACQNLQSSTPDGWLDIDSIKNEVALLNPPREEPVSERELLDICDTEGNQMNGGGTFEIRHSNGKSQIHYVSDPTPHDFRAVGAPGEIGSPISGNASRNPGPPGRAPIGGF.

Polar residues-rich tracts occupy residues 1 to 29 (MPAN…TQDA) and 37 to 68 (KSST…SANI). Disordered regions lie at residues 1-238 (MPAN…SQEE), 307-392 (YANH…SHAT), 433-510 (RMAR…RMEE), 545-739 (EELE…RPNQ), 863-996 (PMHG…DRSD), and 1139-1171 (FRAV…IGGF). A compositionally biased stretch (basic residues) spans 76-86 (NRKKQKRRAKQ). Residues 87 to 96 (AARAAAEQAQ) show a composition bias toward low complexity. The span at 108-124 (DVKKQMQELEARFRETG) shows a compositional bias: basic and acidic residues. The span at 125–150 (LDEQYDDDEQLDPAEDNAYYSDEEGD) shows a compositional bias: acidic residues. Residues 160–172 (GSSTNGYAMPTTN) are compositionally biased toward polar residues. Residues 176–185 (KKQKKKKKSK) show a composition bias toward basic residues. Residues 190-206 (DNSNYAHHGPNGSSHNH) are compositionally biased toward polar residues. A compositionally biased stretch (basic and acidic residues) spans 226 to 238 (SKEKIWNTSSQEE). The span at 315–324 (GPPPMMPPPR) shows a compositional bias: pro residues. The segment covering 356–384 (LGDDEDEEGDEEYSEDDADEDDYSDEEPE) has biased composition (acidic residues). Residues 433–442 (RMAREEDAKE) show a composition bias toward basic and acidic residues. Positions 472-503 (PEEDDYDDEEDDEDEYDSQEEDYDEEEMDSMT) are enriched in acidic residues. Positions 474 to 733 (EDDYDDEEDD…VQAAQSAAQA (260 aa)) form a coiled coil. The segment covering 545–717 (EELEEESRAD…ARELQKREEV (173 aa)) has biased composition (basic and acidic residues). Low complexity predominate over residues 718-734 (AAQQAAVQAAQSAAQAS). Residues 865 to 874 (HGPPGFPQPS) show a composition bias toward pro residues. Positions 895–915 (QAHSRNQSGSFDALSSTTQAQ) are enriched in polar residues.

This sequence belongs to the NST1 family.

Its subcellular location is the cytoplasm. In terms of biological role, may act as a negative regulator of salt tolerance. The protein is Stress response protein nst1 (nst1) of Sclerotinia sclerotiorum (strain ATCC 18683 / 1980 / Ss-1) (White mold).